A 477-amino-acid chain; its full sequence is Probable cytosolic Fe-S cluster assembly factor GM20417 (477 aa).

Residues C23, C68, C71, C74, C187, C243, C395, and C399 each contribute to the [4Fe-4S] cluster site.

This sequence belongs to the NARF family.

Its function is as follows. Component of the cytosolic iron-sulfur (Fe/S) protein assembly machinery. Required for maturation of extramitochondrial Fe/S proteins. The sequence is that of Probable cytosolic Fe-S cluster assembly factor GM20417 from Drosophila sechellia (Fruit fly).